Here is a 144-residue protein sequence, read N- to C-terminus: Large ribosomal subunit protein uL15 (144 aa).

The interval 1 to 62 (MELNNLKPAE…GQMPLQRRLP (62 aa)) is disordered. Residues 21-31 (RGIGSGLGKTA) show a composition bias toward gly residues.

The protein belongs to the universal ribosomal protein uL15 family. In terms of assembly, part of the 50S ribosomal subunit.

Functionally, binds to the 23S rRNA. The polypeptide is Large ribosomal subunit protein uL15 (Paraburkholderia phymatum (strain DSM 17167 / CIP 108236 / LMG 21445 / STM815) (Burkholderia phymatum)).